The primary structure comprises 222 residues: MTDYARYIDHTLLAANATEQQIVTLCDEAIAHHFYAVCVNSGYVPLVAEKLKGSAVQVCSVIGFPLGAGLTSSKAFEAKAAIDAGAQEIDMVINVGWLKSGKIDAVKADIQAVRGVCAAIPLKVILETCLLDDEQIVLVCEMCRQLDVAFVKTSTGFSTDGAREEHVRLMRSTVGSEMGVKASGAVRDRETAQRMIEAGATRIGTSSGVAIVSDDAAAAGNY.

D90 acts as the Proton donor/acceptor in catalysis. The active-site Schiff-base intermediate with acetaldehyde is K152. K181 serves as the catalytic Proton donor/acceptor.

The protein belongs to the DeoC/FbaB aldolase family. DeoC type 1 subfamily.

Its subcellular location is the cytoplasm. It catalyses the reaction 2-deoxy-D-ribose 5-phosphate = D-glyceraldehyde 3-phosphate + acetaldehyde. It participates in carbohydrate degradation; 2-deoxy-D-ribose 1-phosphate degradation; D-glyceraldehyde 3-phosphate and acetaldehyde from 2-deoxy-alpha-D-ribose 1-phosphate: step 2/2. Its function is as follows. Catalyzes a reversible aldol reaction between acetaldehyde and D-glyceraldehyde 3-phosphate to generate 2-deoxy-D-ribose 5-phosphate. This is Deoxyribose-phosphate aldolase from Pectobacterium atrosepticum (strain SCRI 1043 / ATCC BAA-672) (Erwinia carotovora subsp. atroseptica).